The chain runs to 170 residues: Peptide deformylase 2 (170 aa).

2 residues coordinate Fe cation: Cys-94 and His-136. Glu-137 is an active-site residue. Fe cation is bound at residue His-140.

This sequence belongs to the polypeptide deformylase family. Fe(2+) is required as a cofactor.

The catalysed reaction is N-terminal N-formyl-L-methionyl-[peptide] + H2O = N-terminal L-methionyl-[peptide] + formate. In terms of biological role, removes the formyl group from the N-terminal Met of newly synthesized proteins. Requires at least a dipeptide for an efficient rate of reaction. N-terminal L-methionine is a prerequisite for activity but the enzyme has broad specificity at other positions. This is Peptide deformylase 2 from Xanthomonas campestris pv. campestris (strain ATCC 33913 / DSM 3586 / NCPPB 528 / LMG 568 / P 25).